The chain runs to 1357 residues: DNA-directed RNA polymerase subunit beta (1357 aa).

This sequence belongs to the RNA polymerase beta chain family. The RNAP catalytic core consists of 2 alpha, 1 beta, 1 beta' and 1 omega subunit. When a sigma factor is associated with the core the holoenzyme is formed, which can initiate transcription.

It catalyses the reaction RNA(n) + a ribonucleoside 5'-triphosphate = RNA(n+1) + diphosphate. Functionally, DNA-dependent RNA polymerase catalyzes the transcription of DNA into RNA using the four ribonucleoside triphosphates as substrates. This Pseudomonas putida (strain W619) protein is DNA-directed RNA polymerase subunit beta.